The chain runs to 330 residues: 4-epi-cubebol synthase ((2E,6E)-farnesyl diphosphate cyclizing) (330 aa).

Positions 91 and 96 each coordinate Mg(2+). The DDXXXE motif motif lies at 91 to 96 (DDAFCE). Substrate is bound at residue Arg184. The Mg(2+) site is built by Asn230 and Ser234. Lys237 serves as a coordination point for substrate. Position 238 (Glu238) interacts with Mg(2+). 316–317 (RY) provides a ligand contact to substrate.

This sequence belongs to the terpene synthase family. Mg(2+) serves as cofactor.

The catalysed reaction is (2E,6E)-farnesyl diphosphate + H2O = 4-epi-cubebol + diphosphate. It functions in the pathway secondary metabolite biosynthesis; terpenoid biosynthesis. Functionally, catalyzes the conversion of (2E,6E)-farnesyl diphosphate (FPP) to yield the bicyclic sesquiterpenol 4-epi-cubebol via a 1,10-cyclization, which requires the abstraction of the pyrophosphate from FPP to yield a (E,E)-germacradienyl cation. The only accepted substrate is (2E,6E)-farnesyl diphosphate (FPP). The sequence is that of 4-epi-cubebol synthase ((2E,6E)-farnesyl diphosphate cyclizing) from Streptosporangium roseum (strain ATCC 12428 / DSM 43021 / JCM 3005 / KCTC 9067 / NCIMB 10171 / NRRL 2505 / NI 9100).